A 528-amino-acid polypeptide reads, in one-letter code: MKLTVWTYEGPPHVGAMRVATGMTGLHYVLHAPQGDTYADLLFTMIERRDHRPPVSYTTFQARDLGSDTAHLFKDSCRDAYERFKPEAIIVGASCTAELIQDDPGGLAETMGLPIPVIALELPSYQRKENFGCDETFFQIVRALAKPVEKTARVSCNILGPTGLGFRHRDDVEELTGLLSEMGVDVNVVAPMRSSPSDIARLGAAHFNVMLYPETCEAACRHLERAFQQPYTKTVPIGVGATRDFIAEVQGLTGVTGAPDENRLRLPWWSASVDSTYLTGKRVFLFGDATHVKASARIARDEMGFEVVGLGCYNREFARDIRKLAKEFGLEALITDDYLEVEKAIEEAAPEMILGTQMERHIGKRLGIPCAVISAPVHVQDFPARYSPQVGFEGANVIFDTWIHPLVMGLEEHLLAMFREDFEFHDAAGPSHHGGHAPKPMHDAPAASAAAGAEASMAEETAAPSQDAPAATGGDVTVWLADAEKELKKIPFFVRGKAKRNTEKYALEQGVTEISVDTLYEAKAHYAR.

Residue Asp36 participates in [4Fe-4S] cluster binding. Asp274 acts as the Proton donor in catalysis. A substrate-binding site is contributed by 409 to 410 (GL). Residues 429–471 (GPSHHGGHAPKPMHDAPAASAAAGAEASMAEETAAPSQDAPAA) form a disordered region. Positions 444–465 (APAASAAAGAEASMAEETAAPS) are enriched in low complexity.

It belongs to the ChlB/BchB/BchZ family. As to quaternary structure, protochlorophyllide reductase is composed of three subunits; BchL, BchN and BchB. Forms a heterotetramer of two BchB and two BchN subunits. The cofactor is [4Fe-4S] cluster.

It catalyses the reaction chlorophyllide a + oxidized 2[4Fe-4S]-[ferredoxin] + 2 ADP + 2 phosphate = protochlorophyllide a + reduced 2[4Fe-4S]-[ferredoxin] + 2 ATP + 2 H2O. The protein operates within porphyrin-containing compound metabolism; bacteriochlorophyll biosynthesis (light-independent). Functionally, component of the dark-operative protochlorophyllide reductase (DPOR) that uses Mg-ATP and reduced ferredoxin to reduce ring D of protochlorophyllide (Pchlide) to form chlorophyllide a (Chlide). This reaction is light-independent. The NB-protein (BchN-BchB) is the catalytic component of the complex. This is Light-independent protochlorophyllide reductase subunit B from Dinoroseobacter shibae (strain DSM 16493 / NCIMB 14021 / DFL 12).